The following is a 419-amino-acid chain: MSDLIQKAQKVKEASKKLMNLSESQKNLALSCISKKILDNMEYILVENKKDMENAQNKGIKGALLDRLKLTEDRIRQICKGIEDVIKLPDPVGEVISMWKRPNGLIIGQKRVPIGAIGIIYEARPNVTVDAAVLCLKAGNSVLLRGGSEAINSNVALVKTMKEGLIEAGIDEGSIEIVEDTSRETAVAMMKLNEYLDLLIPRGGANLIKTVVQNATVPVIETGVGNCHVFVDESADFEMAEKIVINAKTQRPGVCNAAEKLLVHKNIAESFLPMIVKKLMTKGVEIRGCSKTVEICKQNGIEVKEATEDDWYTEYLDLIIGVKVVDSIDAAIEHINKYGSKHSEAIVTRDYFNAQKFLDFVDAAACYVNASTRFTDGFEFGFGAEIGISTQKLHARGPMGLKELTTIKYIILGSGQVRE.

The protein belongs to the gamma-glutamyl phosphate reductase family.

Its subcellular location is the cytoplasm. The catalysed reaction is L-glutamate 5-semialdehyde + phosphate + NADP(+) = L-glutamyl 5-phosphate + NADPH + H(+). Its pathway is amino-acid biosynthesis; L-proline biosynthesis; L-glutamate 5-semialdehyde from L-glutamate: step 2/2. Its function is as follows. Catalyzes the NADPH-dependent reduction of L-glutamate 5-phosphate into L-glutamate 5-semialdehyde and phosphate. The product spontaneously undergoes cyclization to form 1-pyrroline-5-carboxylate. In Caldicellulosiruptor saccharolyticus (strain ATCC 43494 / DSM 8903 / Tp8T 6331), this protein is Gamma-glutamyl phosphate reductase.